We begin with the raw amino-acid sequence, 339 residues long: Pleckstrin homology domain protein opy1 (339 aa).

The region spanning 25-119 (RVLKSGWLIK…WVHVLRSTTG (95 aa)) is the PH 1 domain. The span at 141-167 (ESEPNVQISDTDFDNISTEPRNQTTSP) shows a compositional bias: polar residues. The segment at 141 to 170 (ESEPNVQISDTDFDNISTEPRNQTTSPLDL) is disordered. In terms of domain architecture, PH 2 spans 233-330 (KVLMQGTIHW…WVAALKTSID (98 aa)).

As to quaternary structure, interacts (via domain PH 1) with phosphatidylinositol 4-phosphate 5-kinase its3; the interaction is direct but opy1 does not appear to regulate its3 localization or function.

It is found in the cell tip. The protein resides in the cell membrane. In terms of biological role, binds phosphatidylinositol 4,5-bisphosphate (PtdIns(4,5)P2/PIP2) at the cell membrane. The chain is Pleckstrin homology domain protein opy1 from Schizosaccharomyces pombe (strain 972 / ATCC 24843) (Fission yeast).